The primary structure comprises 293 residues: Mycothiol S-conjugate amidase (293 aa).

Positions 13, 16, and 144 each coordinate Zn(2+).

This sequence belongs to the MshB deacetylase family. Mca subfamily. As to quaternary structure, monomer. Zn(2+) is required as a cofactor.

It carries out the reaction mycothiol S-conjugate + H2O = an N-acetyl-L-cysteine-S-conjugate + 1D-myo-inositol 2-amino-2-deoxy-alpha-D-glucopyranoside. Its function is as follows. A mycothiol (MSH, N-acetylcysteinyl-glucosaminyl-inositol) S-conjugate amidase, it recycles conjugated MSH to the N-acetyl cysteine conjugate (AcCys S-conjugate, a mercapturic acid) and the MSH precursor. Involved in MSH-dependent detoxification of a number of alkylating agents and antibiotics. This chain is Mycothiol S-conjugate amidase, found in Streptomyces coelicolor (strain ATCC BAA-471 / A3(2) / M145).